The sequence spans 353 residues: Melanin-concentrating hormone receptor 1 (353 aa).

Residues 1 to 29 are disordered; the sequence is MDLEASLLPTGPNASNTSDGPDNLTSAGS. At 1-44 the chain is on the extracellular side; the sequence is MDLEASLLPTGPNASNTSDGPDNLTSAGSPPRTGSISYINIIMP. The segment covering 12–29 has biased composition (polar residues); that stretch reads PNASNTSDGPDNLTSAGS. N-linked (GlcNAc...) asparagine glycosylation is found at Asn13, Asn16, and Asn23. Residues 45–67 traverse the membrane as a helical segment; the sequence is SVFGTICLLGIIGNSTVIFAVVK. At 68 to 79 the chain is on the cytoplasmic side; sequence KSKLHWCNNVPD. A helical membrane pass occupies residues 80 to 102; that stretch reads IFIINLSVVDLLFLLGMPFMIHQ. The Extracellular segment spans residues 103-116; sequence LMGNGVWHFGETMC. Cys116 and Cys194 are oxidised to a cystine. The chain crosses the membrane as a helical span at residues 117 to 139; the sequence is TLITAMDANSQFTSTYILTAMAI. Residues 140-158 lie on the Cytoplasmic side of the membrane; the sequence is DRYLATVHPISSTKFRKPS. The helical transmembrane segment at 159–181 threads the bilayer; the sequence is VATLVICLLWALSFISITPVWLY. Topologically, residues 182 to 209 are extracellular; that stretch reads ARLIPFPGGAVGCGIRLPNPDTDLYWFT. Residues 210 to 232 form a helical membrane-spanning segment; that stretch reads LYQFFLAFALPFVVITAAYVRIL. At 233–252 the chain is on the cytoplasmic side; that stretch reads QRMTSSVAPASQRSIRLRTK. A helical transmembrane segment spans residues 253 to 275; the sequence is RVTRTAIAICLVFFVCWAPYYVL. The Extracellular portion of the chain corresponds to 276-289; sequence QLTQLSISRPTLTF. A helical membrane pass occupies residues 290–312; sequence VYLYNAAISLGYANSCLNPFVYI. The Cytoplasmic portion of the chain corresponds to 313-353; it reads VLCETFRKRLVLSVKPAAQGQLRAVSNAQTADEERTESKGT.

The protein belongs to the G-protein coupled receptor 1 family. As to quaternary structure, interacts with NCDN. As to expression, highest level in brain, particularly in the frontal cortex and hypothalamus, lower levels in the liver and heart.

The protein localises to the cell membrane. Its function is as follows. Receptor for melanin-concentrating hormone, coupled to both G proteins that inhibit adenylyl cyclase and G proteins that activate phosphoinositide hydrolysis. The sequence is that of Melanin-concentrating hormone receptor 1 from Homo sapiens (Human).